The following is a 506-amino-acid chain: Tyrosine-protein kinase FRK (506 aa).

The SH3 domain occupies 43 to 111 (SQGQYFVALF…PSNYVAEDRS (69 aa)). The region spanning 117–209 (WFFGAIKRAD…GLCVKLEKPC (93 aa)) is the SH2 domain. Thr-179 is modified (phosphothreonine). The 258-residue stretch at 235 to 492 (IQLLKRLGSG…TLHWKLEDYF (258 aa)) folds into the Protein kinase domain. Residues 241 to 249 (LGSGQFGEV) and Lys-263 each bind ATP. The active-site Proton acceptor is the Asp-355. At Tyr-388 the chain carries Phosphotyrosine; by autocatalysis.

It belongs to the protein kinase superfamily. Tyr protein kinase family. SRC subfamily. In terms of assembly, interacts (via the SH3-domain) with PTEN. Interacts with RB1. In terms of tissue distribution, highly expressed in stomach, small intestine and colon. Concentrated in the brush border membranes of epithelial cells, throughout the maturation axis of the adult small intestine.

It is found in the cytoplasm. It localises to the nucleus. The enzyme catalyses L-tyrosyl-[protein] + ATP = O-phospho-L-tyrosyl-[protein] + ADP + H(+). In terms of biological role, non-receptor tyrosine-protein kinase that negatively regulates cell proliferation. Positively regulates PTEN protein stability through phosphorylation of PTEN on 'Tyr-336', which in turn prevents its ubiquitination and degradation, possibly by reducing its binding to NEDD4. May function as a tumor suppressor. The chain is Tyrosine-protein kinase FRK (Frk) from Rattus norvegicus (Rat).